The sequence spans 187 residues: Oligoribonuclease (187 aa).

The region spanning 7 to 170 is the Exonuclease domain; it reads LCWLDMEMTG…DDILESIEEM (164 aa). The active site involves tyrosine 128.

This sequence belongs to the oligoribonuclease family.

It is found in the cytoplasm. Its function is as follows. 3'-to-5' exoribonuclease specific for small oligoribonucleotides. The sequence is that of Oligoribonuclease from Neisseria meningitidis serogroup C / serotype 2a (strain ATCC 700532 / DSM 15464 / FAM18).